The sequence spans 116 residues: Nicotine metabolites export pump subunit NepA (116 aa).

Transmembrane regions (helical) follow at residues 10 to 30 (LTIW…TSLL), 42 to 62 (TVAV…ILKF), 67 to 87 (IAYA…GVLF), and 92 to 112 (FSWK…TLNL).

Belongs to the drug/metabolite transporter (DMT) superfamily. Small multidrug resistance (SMR) (TC 2.A.7.1) family. NepA/NepB subfamily. The efflux pump is composed of NepA and NepB.

It localises to the cell membrane. Functionally, component of an efflux pump responsible for the transport of nicotine breakdown products, in particular methylamine, out of the cell. This pump apparently serves as a metabolic valve for nicotine catabolites and may protect the bacteria from the potentially toxic side effects of these compounds. The polypeptide is Nicotine metabolites export pump subunit NepA (nepA) (Paenarthrobacter nicotinovorans (Arthrobacter nicotinovorans)).